The primary structure comprises 585 residues: Arginine--tRNA ligase (585 aa).

The short motif at 131–141 is the 'HIGH' region element; that stretch reads ANPTGPMHVGH.

This sequence belongs to the class-I aminoacyl-tRNA synthetase family. As to quaternary structure, monomer.

The protein resides in the cytoplasm. The catalysed reaction is tRNA(Arg) + L-arginine + ATP = L-arginyl-tRNA(Arg) + AMP + diphosphate. The chain is Arginine--tRNA ligase from Agrobacterium fabrum (strain C58 / ATCC 33970) (Agrobacterium tumefaciens (strain C58)).